Reading from the N-terminus, the 432-residue chain is Anaerobic glycerol-3-phosphate dehydrogenase subunit B (432 aa).

This sequence belongs to the anaerobic G-3-P dehydrogenase subunit B family. In terms of assembly, composed of a catalytic GlpA/B dimer and of membrane bound GlpC. FMN is required as a cofactor.

It catalyses the reaction a quinone + sn-glycerol 3-phosphate = dihydroxyacetone phosphate + a quinol. It functions in the pathway polyol metabolism; glycerol degradation via glycerol kinase pathway; glycerone phosphate from sn-glycerol 3-phosphate (anaerobic route): step 1/1. Its function is as follows. Conversion of glycerol 3-phosphate to dihydroxyacetone. Uses fumarate or nitrate as electron acceptor. The polypeptide is Anaerobic glycerol-3-phosphate dehydrogenase subunit B (Haemophilus influenzae (strain PittGG)).